The chain runs to 238 residues: DNA damage-regulated autophagy modulator protein 1 (238 aa).

6 helical membrane passes run 9–29, 53–73, 91–111, 116–136, 161–181, and 200–220; these read AFVPFLLVTWSSAAFIISYVV, SGIFGFMINFSAFLGAATMYT, VFNLVSLALGLVGCIGMGIVA, LAVPVVHDGGALLAFVCGVVY, MAISAVSCAAVVPMIACASLI, and VSAICEWTVAFGFIFYFLTFI.

This sequence belongs to the DRAM/TMEM150 family.

It is found in the lysosome membrane. Lysosomal modulator of autophagy that plays a central role in p53/TP53-mediated apoptosis. Not involved in p73/TP73-mediated autophagy. This Mus musculus (Mouse) protein is DNA damage-regulated autophagy modulator protein 1 (Dram1).